Here is a 547-residue protein sequence, read N- to C-terminus: CTP synthase (547 aa).

The tract at residues 1–265 (MARYVFITGG…DQAVLDAFGI (265 aa)) is amidoligase domain. Serine 13 lines the CTP pocket. Serine 13 is a UTP binding site. Residues 14-19 (SLGKGL) and aspartate 71 each bind ATP. Positions 71 and 139 each coordinate Mg(2+). Residues 146–148 (DIE), 186–191 (KTKPTQ), and lysine 222 each bind CTP. Residues 186–191 (KTKPTQ) and lysine 222 contribute to the UTP site. Residues 291 to 546 (RVAIVGKYTQ…VRAAVEVSRL (256 aa)) form the Glutamine amidotransferase type-1 domain. Glycine 353 contributes to the L-glutamine binding site. The Nucleophile; for glutamine hydrolysis role is filled by cysteine 380. Residues 381–384 (LGMQ), glutamate 404, and arginine 474 each bind L-glutamine. Active-site residues include histidine 519 and glutamate 521.

Belongs to the CTP synthase family. In terms of assembly, homotetramer.

The catalysed reaction is UTP + L-glutamine + ATP + H2O = CTP + L-glutamate + ADP + phosphate + 2 H(+). It catalyses the reaction L-glutamine + H2O = L-glutamate + NH4(+). The enzyme catalyses UTP + NH4(+) + ATP = CTP + ADP + phosphate + 2 H(+). Its pathway is pyrimidine metabolism; CTP biosynthesis via de novo pathway; CTP from UDP: step 2/2. Allosterically activated by GTP, when glutamine is the substrate; GTP has no effect on the reaction when ammonia is the substrate. The allosteric effector GTP functions by stabilizing the protein conformation that binds the tetrahedral intermediate(s) formed during glutamine hydrolysis. Inhibited by the product CTP, via allosteric rather than competitive inhibition. Catalyzes the ATP-dependent amination of UTP to CTP with either L-glutamine or ammonia as the source of nitrogen. Regulates intracellular CTP levels through interactions with the four ribonucleotide triphosphates. This is CTP synthase from Cereibacter sphaeroides (strain ATCC 17023 / DSM 158 / JCM 6121 / CCUG 31486 / LMG 2827 / NBRC 12203 / NCIMB 8253 / ATH 2.4.1.) (Rhodobacter sphaeroides).